The primary structure comprises 230 residues: Enolase-phosphatase E1 (230 aa).

Belongs to the HAD-like hydrolase superfamily. MasA/MtnC family. Monomer. It depends on Mg(2+) as a cofactor.

The catalysed reaction is 5-methylsulfanyl-2,3-dioxopentyl phosphate + H2O = 1,2-dihydroxy-5-(methylsulfanyl)pent-1-en-3-one + phosphate. It participates in amino-acid biosynthesis; L-methionine biosynthesis via salvage pathway; L-methionine from S-methyl-5-thio-alpha-D-ribose 1-phosphate: step 3/6. The protein operates within amino-acid biosynthesis; L-methionine biosynthesis via salvage pathway; L-methionine from S-methyl-5-thio-alpha-D-ribose 1-phosphate: step 4/6. Bifunctional enzyme that catalyzes the enolization of 2,3-diketo-5-methylthiopentyl-1-phosphate (DK-MTP-1-P) into the intermediate 2-hydroxy-3-keto-5-methylthiopentenyl-1-phosphate (HK-MTPenyl-1-P), which is then dephosphorylated to form the acireductone 1,2-dihydroxy-3-keto-5-methylthiopentene (DHK-MTPene). This is Enolase-phosphatase E1 from Sulfurihydrogenibium sp. (strain YO3AOP1).